Reading from the N-terminus, the 480-residue chain is M-phase inducer phosphatase cdc-25.2 (480 aa).

Positions 1–20 are enriched in polar residues; the sequence is MNRPSQISQDVAQPLSNQHE. A disordered region spans residues 1-35; sequence MNRPSQISQDVAQPLSNQHETAMMSSDEDSMSRDS. Residues 243 to 349 form the Rhodanese domain; it reads FDDKYILIDC…FFFAANEANI (107 aa). The segment at 411-452 is disordered; sequence TSAPSTSTENIDTNDDCQKSRTPAVPRIASRRNLFSDPSHSP.

Belongs to the MPI phosphatase family.

The enzyme catalyses O-phospho-L-tyrosyl-[protein] + H2O = L-tyrosyl-[protein] + phosphate. Functionally, required for intestinal cell division following the 16E cell stage of embryogenesis. Regulates intestinal cell divisions and binucleations probably by modulating the activity of the cell cycle regulator wee-1.3 and by activating the cdk-1/cyb-1 complex. Plays a role in male tail development, via regulation of the cell divisions of the ray precursor cell lineages, perhaps acting together with cell cycle regulators cyl-1, cdk-1, cyb-3, and cyd-1. The protein is M-phase inducer phosphatase cdc-25.2 of Caenorhabditis elegans.